The chain runs to 149 residues: Cytochrome c' (149 aa).

Positions 1–19 are cleaved as a signal peptide; it reads MRRVLLATLMAALPAAAMA. Heme c contacts are provided by Arg-29, Thr-89, Ala-90, Cys-138, Cys-141, and His-142.

In terms of assembly, monomer and homodimer. In terms of processing, binds 1 heme c group covalently per subunit.

Cytochrome c' is the most widely occurring bacterial c-type cytochrome. Cytochromes c' are high-spin proteins and the heme has no sixth ligand. Their exact function is not known. The polypeptide is Cytochrome c' (cycP) (Cereibacter sphaeroides (strain ATCC 17023 / DSM 158 / JCM 6121 / CCUG 31486 / LMG 2827 / NBRC 12203 / NCIMB 8253 / ATH 2.4.1.) (Rhodobacter sphaeroides)).